Here is a 404-residue protein sequence, read N- to C-terminus: NADH-quinone oxidoreductase subunit D 2 (404 aa).

It belongs to the complex I 49 kDa subunit family. NDH-1 is composed of 14 different subunits. Subunits NuoB, C, D, E, F, and G constitute the peripheral sector of the complex.

The protein localises to the cell inner membrane. It catalyses the reaction a quinone + NADH + 5 H(+)(in) = a quinol + NAD(+) + 4 H(+)(out). In terms of biological role, NDH-1 shuttles electrons from NADH, via FMN and iron-sulfur (Fe-S) centers, to quinones in the respiratory chain. The immediate electron acceptor for the enzyme in this species is believed to be ubiquinone. Couples the redox reaction to proton translocation (for every two electrons transferred, four hydrogen ions are translocated across the cytoplasmic membrane), and thus conserves the redox energy in a proton gradient. This Rhizobium meliloti (strain 1021) (Ensifer meliloti) protein is NADH-quinone oxidoreductase subunit D 2.